The sequence spans 284 residues: MTVPVLRTLSALRSATREWHLAGETIGVVPTMGALHDGHLSLVAAAKSACDRVIVTIFVNPKQFNKASDLASYPRTEEDDARKLARFDVDAVYAPDVSQIYPEGFCTNVSVAGMTDVLCGAHRPGHFDGVATVVTKLFTQTSADKAFFGEKDFQQLMVVQRMARDLDIPIEVVGCPTIREEDGLAMSSRNLLLSDRARTMAPRMHEIMQEAATALGQGAPFDALQATALRQLTAAGFTDVDYFELRSCASLSLLDHASVPARLFAAAWLAGVRLIDNIDVPVAR.

ATP is bound at residue 32 to 39 (MGALHDGH). Catalysis depends on H39, which acts as the Proton donor. Q63 contacts (R)-pantoate. Beta-alanine is bound at residue Q63. 149-152 (GEKD) is a binding site for ATP. Q155 provides a ligand contact to (R)-pantoate. ATP-binding positions include I178 and 186 to 189 (MSSR).

It belongs to the pantothenate synthetase family. As to quaternary structure, homodimer.

It localises to the cytoplasm. It carries out the reaction (R)-pantoate + beta-alanine + ATP = (R)-pantothenate + AMP + diphosphate + H(+). It participates in cofactor biosynthesis; (R)-pantothenate biosynthesis; (R)-pantothenate from (R)-pantoate and beta-alanine: step 1/1. Its function is as follows. Catalyzes the condensation of pantoate with beta-alanine in an ATP-dependent reaction via a pantoyl-adenylate intermediate. In Roseobacter denitrificans (strain ATCC 33942 / OCh 114) (Erythrobacter sp. (strain OCh 114)), this protein is Pantothenate synthetase.